A 347-amino-acid chain; its full sequence is Aspartate-semialdehyde dehydrogenase (347 aa).

Residues 10–13 (TGMV) and 37–38 (RS) each bind NADP(+). Residue Arg-108 coordinates phosphate. Residue Cys-147 is the Acyl-thioester intermediate of the active site. Residue Gln-174 participates in substrate binding. Residue 177–178 (SG) coordinates NADP(+). Residue Glu-200 participates in substrate binding. Lys-203 contacts phosphate. Arg-233 serves as a coordination point for substrate. The active-site Proton acceptor is the His-240. The segment at 276-299 (APEKPVVVRDEENRPQPRMDRDMD) is disordered. A compositionally biased stretch (basic and acidic residues) spans 281 to 299 (VVVRDEENRPQPRMDRDMD). 327-328 (NT) serves as a coordination point for NADP(+).

Belongs to the aspartate-semialdehyde dehydrogenase family. In terms of assembly, homodimer.

The catalysed reaction is L-aspartate 4-semialdehyde + phosphate + NADP(+) = 4-phospho-L-aspartate + NADPH + H(+). It participates in amino-acid biosynthesis; L-lysine biosynthesis via DAP pathway; (S)-tetrahydrodipicolinate from L-aspartate: step 2/4. It functions in the pathway amino-acid biosynthesis; L-methionine biosynthesis via de novo pathway; L-homoserine from L-aspartate: step 2/3. Its pathway is amino-acid biosynthesis; L-threonine biosynthesis; L-threonine from L-aspartate: step 2/5. Catalyzes the NADPH-dependent formation of L-aspartate-semialdehyde (L-ASA) by the reductive dephosphorylation of L-aspartyl-4-phosphate. The polypeptide is Aspartate-semialdehyde dehydrogenase (Methanothermobacter thermautotrophicus (strain ATCC 29096 / DSM 1053 / JCM 10044 / NBRC 100330 / Delta H) (Methanobacterium thermoautotrophicum)).